A 106-amino-acid polypeptide reads, in one-letter code: Large ribosomal subunit protein uL24 (106 aa).

The protein belongs to the universal ribosomal protein uL24 family. Part of the 50S ribosomal subunit.

Functionally, one of two assembly initiator proteins, it binds directly to the 5'-end of the 23S rRNA, where it nucleates assembly of the 50S subunit. One of the proteins that surrounds the polypeptide exit tunnel on the outside of the subunit. In Clostridium acetobutylicum (strain ATCC 824 / DSM 792 / JCM 1419 / IAM 19013 / LMG 5710 / NBRC 13948 / NRRL B-527 / VKM B-1787 / 2291 / W), this protein is Large ribosomal subunit protein uL24.